The sequence spans 577 residues: Adenine deaminase (577 aa).

It belongs to the metallo-dependent hydrolases superfamily. Adenine deaminase family. The cofactor is Mn(2+).

It carries out the reaction adenine + H2O + H(+) = hypoxanthine + NH4(+). The polypeptide is Adenine deaminase (Bacillus velezensis (strain DSM 23117 / BGSC 10A6 / LMG 26770 / FZB42) (Bacillus amyloliquefaciens subsp. plantarum)).